A 64-amino-acid chain; its full sequence is MRILYLLFSLLFLALQVSPGLSSPRRDMLFCKGGSCHFGGCPSHLIKVGSCFGFRSCCKWPWNA.

A signal peptide spans 1 to 22 (MRILYLLFSLLFLALQVSPGLS). A propeptide spanning residues 23-28 (SPRRDM) is cleaved from the precursor. Cystine bridges form between cysteine 31–cysteine 57, cysteine 36–cysteine 51, and cysteine 41–cysteine 58.

As to expression, expressed in circulating heterophil granulocytes and bone marrow (at protein level). Strong expression in the bone marrow, lung and testis. Moderate expression in the bursa and intestine. Low expression in the cloaca, gall bladder, brain, pancreas, trachea, air sacs and spleen. Expressed in the vagina, ovarian stroma and the theca layer of the ovarian follicle, but not in the granulosa layer of the ovarian follicle.

It is found in the secreted. The protein localises to the cytoplasmic granule. In terms of biological role, potent antibacterial activity against the Gram-negative bacterium E.coli ML-35, and against the Gram-positive bacterium L.monocytogenes EGD. Lacks antifungal activity against C.albicans. This is Gallinacin-2 (GAL2) from Gallus gallus (Chicken).